The following is a 201-amino-acid chain: 3-isopropylmalate dehydratase small subunit (201 aa).

This sequence belongs to the LeuD family. LeuD type 1 subfamily. As to quaternary structure, heterodimer of LeuC and LeuD.

It catalyses the reaction (2R,3S)-3-isopropylmalate = (2S)-2-isopropylmalate. The protein operates within amino-acid biosynthesis; L-leucine biosynthesis; L-leucine from 3-methyl-2-oxobutanoate: step 2/4. Catalyzes the isomerization between 2-isopropylmalate and 3-isopropylmalate, via the formation of 2-isopropylmaleate. The polypeptide is 3-isopropylmalate dehydratase small subunit (Brucella anthropi (strain ATCC 49188 / DSM 6882 / CCUG 24695 / JCM 21032 / LMG 3331 / NBRC 15819 / NCTC 12168 / Alc 37) (Ochrobactrum anthropi)).